Consider the following 733-residue polypeptide: Nuclear hormone receptor family member nhr-66 (733 aa).

Low complexity-rich tracts occupy residues 113–130 and 165–185; these read PAIP…SQAS and QQNR…QQQN. Positions 113–190 are disordered; sequence PAIPSSSSCS…AQQQNSMARK (78 aa). The segment at residues 266 to 343 is a DNA-binding region (nuclear receptor); it reads VPACAICGTD…SGMDKNSVQH (78 aa). 2 consecutive NR C4-type zinc fingers follow at residues 269–289 and 305–326; these read CAIC…CAAC and CNKG…CRAC. A disordered region spans residues 361-396; it reads PDAEFEPSAKVSTVSEPSTSSGPSGGFNQNVSSPAG. The segment covering 371 to 382 has biased composition (low complexity); it reads VSTVSEPSTSSG. Positions 444–687 constitute an NR LBD domain; the sequence is CLGDWFRKPS…ACFNQMLDVE (244 aa). The AF-2 stretch occupies residues 676 to 687; sequence ADACFNQMLDVE. A disordered region spans residues 691–733; it reads VSPDGQKDSEAEQGPSPVSVPEAARGSYQDDDMPPVLEKNCDL.

It belongs to the nuclear hormone receptor family. As to quaternary structure, interacts with nuclear hormone receptor nhr-49; the interaction is direct. As to expression, widely expressed, including in hypodermis, gut, muscle, and neuronal cells of the ventral nerve cord, head, and tail ganglia. Expressed in the head ganglion in several sensory and interneurons, including AVA.

The protein localises to the nucleus. Transcription factor. Binds to regulatory elements and regulates transcription of target genes, including the potassium channel accessory subunit mps-2. Negatively regulates transcription of mps-2, thereby modulating age-dependent memory decline. In concert with nuclear hormone receptor nhr-49, involved in regulating target genes with roles in sphingolipid breakdown and lipid remodeling. Plays a role in modulating mitochondrial morphology and function. This chain is Nuclear hormone receptor family member nhr-66, found in Caenorhabditis elegans.